Here is a 233-residue protein sequence, read N- to C-terminus: Adenosine 5'-phosphosulfate reductase (233 aa).

[4Fe-4S] cluster-binding residues include Cys-120, Cys-121, Cys-203, and Cys-206. Catalysis depends on Cys-229, which acts as the Nucleophile; cysteine thiosulfonate intermediate.

It belongs to the PAPS reductase family. CysH subfamily. [4Fe-4S] cluster serves as cofactor.

Its subcellular location is the cytoplasm. It carries out the reaction [thioredoxin]-disulfide + sulfite + AMP + 2 H(+) = adenosine 5'-phosphosulfate + [thioredoxin]-dithiol. It participates in sulfur metabolism; hydrogen sulfide biosynthesis; sulfite from sulfate. In terms of biological role, catalyzes the formation of sulfite from adenosine 5'-phosphosulfate (APS) using thioredoxin as an electron donor. This is Adenosine 5'-phosphosulfate reductase from Lysinibacillus sphaericus (strain C3-41).